The following is a 354-amino-acid chain: Phenylalanine--tRNA ligase alpha subunit (354 aa).

Residue E279 participates in Mg(2+) binding.

This sequence belongs to the class-II aminoacyl-tRNA synthetase family. Phe-tRNA synthetase alpha subunit type 1 subfamily. In terms of assembly, tetramer of two alpha and two beta subunits. It depends on Mg(2+) as a cofactor.

The protein resides in the cytoplasm. The catalysed reaction is tRNA(Phe) + L-phenylalanine + ATP = L-phenylalanyl-tRNA(Phe) + AMP + diphosphate + H(+). In Cupriavidus pinatubonensis (strain JMP 134 / LMG 1197) (Cupriavidus necator (strain JMP 134)), this protein is Phenylalanine--tRNA ligase alpha subunit.